The chain runs to 238 residues: ATP-dependent Clp protease ATP-binding subunit CLPT1, chloroplastic (238 aa).

The N-terminal 64 residues, 1 to 64 (MASYTVSFIP…VPKLRCLTSA (64 aa)), are a transit peptide targeting the chloroplast. The Clp R domain occupies 83–228 (IPKWSARAIK…KEVEKSMNED (146 aa)). 2 repeat regions span residues 86 to 151 (WSAR…LGKS) and 163 to 228 (LTEP…MNED).

This sequence belongs to the ClpA/ClpB family. Monomer and homodimer. Binds to the CLP3-6 ring (P-ring). The dimers monomerize before association to the P-ring. Component of the chloroplastic Clp protease core complex which consist of at least 16 proteins: CLPP4 (3 copies), CLPP5 (3 copies), CLPR4 (2 copies), ClpP1 (1 copy), CLPP6 (1 copy), CLPR2 (1 copy), CLPT1 (1 copy), CLPT2 (1 copy) and 3 copies of CLPP3 and/or CLPR1 and/or CLPR3. Interacts with CLPC2 and CLPD. Interacts with CPN21. No interactions with CLPS1.

The protein localises to the plastid. The protein resides in the chloroplast. In terms of biological role, accessory protein regulating the assembly of the plastidial Clp protease system. CLPT1 first binds to the heptameric P-ring containing the CLP3-6 subunits followed by CLPT2, and only then does the P-ring combine with the R-ring composed of the clpP1 and CLPR1-4 subunits. Once the core complex is fully assembled, it then associates to the CLPC chaperone partner to form the functional protease. CLPT1 and CLPT2 are partially redundant. The chain is ATP-dependent Clp protease ATP-binding subunit CLPT1, chloroplastic from Arabidopsis thaliana (Mouse-ear cress).